The chain runs to 120 residues: Small ribosomal subunit protein eS25 (120 aa).

The interval 1–32 is disordered; sequence MPPKAGQTKKAKMEAANKGAKKTTKKWSKGQS. Basic residues predominate over residues 19-28; sequence GAKKTTKKWS.

The protein belongs to the eukaryotic ribosomal protein eS25 family.

The chain is Small ribosomal subunit protein eS25 (RPS25) from Leishmania infantum.